Consider the following 431-residue polypeptide: Serine hydroxymethyltransferase (431 aa).

121 to 123 provides a ligand contact to (6S)-5,6,7,8-tetrahydrofolate; it reads AHV. An N6-(pyridoxal phosphate)lysine modification is found at lysine 227.

It belongs to the SHMT family. Homodimer. It depends on pyridoxal 5'-phosphate as a cofactor.

Its subcellular location is the cytoplasm. Its pathway is amino-acid biosynthesis; glycine biosynthesis; glycine from L-serine: step 1/1. In terms of biological role, catalyzes the reversible interconversion of serine and glycine with a modified folate serving as the one-carbon carrier. Also exhibits a pteridine-independent aldolase activity toward beta-hydroxyamino acids, producing glycine and aldehydes, via a retro-aldol mechanism. This Metallosphaera sedula (strain ATCC 51363 / DSM 5348 / JCM 9185 / NBRC 15509 / TH2) protein is Serine hydroxymethyltransferase.